Consider the following 376-residue polypeptide: Chaperone protein DnaJ (376 aa).

The J domain maps to 5-70; it reads DYYEVLGVAR…NKRRAYDAHG (66 aa). A CR-type zinc finger spans residues 132–209; it reads GIERRIEIPT…CHGAGRVEED (78 aa). Zn(2+) contacts are provided by Cys-145, Cys-148, Cys-161, Cys-164, Cys-183, Cys-186, Cys-197, and Cys-200. 4 CXXCXGXG motif repeats span residues 145 to 152, 161 to 168, 183 to 190, and 197 to 204; these read CEPCHGSG, CATCHGRG, CPHCDGRG, and CKTCHGAG.

It belongs to the DnaJ family. In terms of assembly, homodimer. Requires Zn(2+) as cofactor.

The protein resides in the cytoplasm. Functionally, participates actively in the response to hyperosmotic and heat shock by preventing the aggregation of stress-denatured proteins and by disaggregating proteins, also in an autonomous, DnaK-independent fashion. Unfolded proteins bind initially to DnaJ; upon interaction with the DnaJ-bound protein, DnaK hydrolyzes its bound ATP, resulting in the formation of a stable complex. GrpE releases ADP from DnaK; ATP binding to DnaK triggers the release of the substrate protein, thus completing the reaction cycle. Several rounds of ATP-dependent interactions between DnaJ, DnaK and GrpE are required for fully efficient folding. Also involved, together with DnaK and GrpE, in the DNA replication of plasmids through activation of initiation proteins. This is Chaperone protein DnaJ from Xanthomonas campestris pv. campestris (strain 8004).